Here is a 206-residue protein sequence, read N- to C-terminus: Thymidylate kinase (206 aa).

11–18 (GPEGAGKT) serves as a coordination point for ATP.

This sequence belongs to the thymidylate kinase family.

The catalysed reaction is dTMP + ATP = dTDP + ADP. Phosphorylation of dTMP to form dTDP in both de novo and salvage pathways of dTTP synthesis. This chain is Thymidylate kinase (tmk), found in Deinococcus radiodurans (strain ATCC 13939 / DSM 20539 / JCM 16871 / CCUG 27074 / LMG 4051 / NBRC 15346 / NCIMB 9279 / VKM B-1422 / R1).